A 576-amino-acid polypeptide reads, in one-letter code: MTWELHLLLLLGLGLRSQEALPPPCESQIYCHGELLHQVQMAQLYQDDKQFVDMSLATSPDEVLQKFSELATVHNHSIPKEQLQEFVQSHFQPVGQELQSWTPEDWKDSPQFLQKISDANLRVWAEELHKIWKKLGKKMKAEVLSYPERSSLIYSKHPFIVPGGRFVEFYYWDSYWVMEGLLLSEMASTVKGMLQNFLDLVKTYGHIPNGGRIYYLQRSQPPLLTLMMDRYVAHTKDVAFLQENIGTLASELDFWTVNRTVSVVSGGQSYVLNRYYVPYGGPRPESYRKDAELANSVPEGDRETLWAELKAGAESGWDFSSRWLVGGPDPDLLSSIRTSKMVPADLNAFLCQAEELMSNFYSRLGNDTEATKYRNLRAQRLAAMEAVLWDEQKGAWFDYDLEKGKKNLEFYPSNLSPLWAGCFSDPSVADKALKYLEDSKILTYQYGIPTSLRNTGQQWDFPNAWAPLQDLVIRGLAKSASPRTQEVAFQLAQNWIKTNFKVYSQKSAMFEKYDISNGGHPGGGGEYEVQEGFGWTNGLALMLLDRYGDQLTSGTQLASLGPHCLVAALLLSLLLQ.

A signal peptide spans 1 to 20 (MTWELHLLLLLGLGLRSQEA). N-linked (GlcNAc...) asparagine glycosylation is present at asparagine 75. Residues arginine 165, 172–173 (WD), asparagine 209, and 218–220 (RSQ) each bind substrate. Asparagine 258 carries an N-linked (GlcNAc...) asparagine glycan. Substrate contacts are provided by residues 283–285 (RPE) and glycine 316. Aspartate 318 (proton donor/acceptor) is an active-site residue. An N-linked (GlcNAc...) asparagine glycan is attached at asparagine 366. Catalysis depends on glutamate 511, which acts as the Proton donor/acceptor. Glutamate 526 is a substrate binding site. Serine 553 carries GPI-anchor amidated serine lipidation. The propeptide at 554-576 (GTQLASLGPHCLVAALLLSLLLQ) is removed in mature form.

Belongs to the glycosyl hydrolase 37 family. In terms of assembly, homodimer; disulfide-linked.

It localises to the cell membrane. The enzyme catalyses alpha,alpha-trehalose + H2O = alpha-D-glucose + beta-D-glucose. Functionally, intestinal trehalase is probably involved in the hydrolysis of ingested trehalose. This Mus musculus (Mouse) protein is Trehalase.